The primary structure comprises 338 residues: Glyceraldehyde-3-phosphate dehydrogenase, cytosolic (338 aa).

Residues 14 to 15 (RI), Asp-36, and Arg-83 each bind NAD(+). Residues 154 to 156 (SCT), Thr-185, 214 to 215 (TG), and Arg-237 contribute to the D-glyceraldehyde 3-phosphate site. The active-site Nucleophile is Cys-155. Asn-319 provides a ligand contact to NAD(+).

Belongs to the glyceraldehyde-3-phosphate dehydrogenase family. In terms of assembly, homotetramer.

It localises to the cytoplasm. The enzyme catalyses D-glyceraldehyde 3-phosphate + phosphate + NAD(+) = (2R)-3-phospho-glyceroyl phosphate + NADH + H(+). It participates in carbohydrate degradation; glycolysis; pyruvate from D-glyceraldehyde 3-phosphate: step 1/5. Key enzyme in glycolysis that catalyzes the first step of the pathway by converting D-glyceraldehyde 3-phosphate (G3P) into 3-phospho-D-glyceroyl phosphate. Essential for the maintenance of cellular ATP levels and carbohydrate metabolism. The chain is Glyceraldehyde-3-phosphate dehydrogenase, cytosolic (GAPC) from Ranunculus acris (Meadow buttercup).